The following is a 264-amino-acid chain: Thymidylate synthase (264 aa).

Residue R21 participates in dUMP binding. Position 51 (H51) interacts with (6R)-5,10-methylene-5,6,7,8-tetrahydrofolate. Residue 126–127 (RR) coordinates dUMP. The active-site Nucleophile is the C146. DUMP-binding positions include 166-169 (RSCD), N177, and 207-209 (HLY). Position 169 (D169) interacts with (6R)-5,10-methylene-5,6,7,8-tetrahydrofolate. A (6R)-5,10-methylene-5,6,7,8-tetrahydrofolate-binding site is contributed by A263.

It belongs to the thymidylate synthase family. Bacterial-type ThyA subfamily. In terms of assembly, homodimer.

The protein localises to the cytoplasm. The catalysed reaction is dUMP + (6R)-5,10-methylene-5,6,7,8-tetrahydrofolate = 7,8-dihydrofolate + dTMP. Its pathway is pyrimidine metabolism; dTTP biosynthesis. Functionally, catalyzes the reductive methylation of 2'-deoxyuridine-5'-monophosphate (dUMP) to 2'-deoxythymidine-5'-monophosphate (dTMP) while utilizing 5,10-methylenetetrahydrofolate (mTHF) as the methyl donor and reductant in the reaction, yielding dihydrofolate (DHF) as a by-product. This enzymatic reaction provides an intracellular de novo source of dTMP, an essential precursor for DNA biosynthesis. This Sodalis glossinidius (strain morsitans) protein is Thymidylate synthase.